Reading from the N-terminus, the 374-residue chain is Histone acetyltransferase type B catalytic subunit (374 aa).

2 interaction with histone H4 N-terminus regions span residues 42 to 44 and 194 to 196; these read DSE and YKY. The region spanning 135 to 303 is the N-acetyltransferase domain; sequence VVYKSSLVDD…ESSRKSLKLE (169 aa). The segment at 197–205 is interaction with HAT2; it reads WHYLGAKSF. Acetyl-CoA is bound by residues 220–222 and 227–233; these read FLI and QNKGHGS. The active-site Proton donor/acceptor is glutamate 255. Acetyl-CoA-binding residues include asparagine 258 and arginine 267. Serine 354 carries the post-translational modification Phosphoserine.

This sequence belongs to the HAT1 family. In terms of assembly, component of the HAT-B complex composed of at least HAT1 and HAT2. In the cytoplasm, this complex binds to the histone H4 tail. In the nucleus, the HAT-B complex has an additional component, the histone H3/H4 chaperone HIF1.

It localises to the cytoplasm. Its subcellular location is the nucleus. It catalyses the reaction L-lysyl-[protein] + acetyl-CoA = N(6)-acetyl-L-lysyl-[protein] + CoA + H(+). Catalytic component of the histone acetylase B (HAT-B) complex. Acetylates 'Lys-12' of free histone H4 in the cytoplasm. The complex is also found in the nucleus, however it is not certain that it modifies histone H4 when packaged in chromatin. Histone H4 'Lys-12' acetylation is required for telomeric silencing. Has intrinsic substrate specificity that modifies lysine in recognition sequence GXGKXG. Involved in DNA double-strand break repair. This is Histone acetyltransferase type B catalytic subunit (HAT1) from Saccharomyces cerevisiae (strain ATCC 204508 / S288c) (Baker's yeast).